Reading from the N-terminus, the 315-residue chain is Lipase 3 (315 aa).

The signal sequence occupies residues 1–18 (MLLKRLGLAALFSLSMVG). Cys-19 carries the N-palmitoyl cysteine lipid modification. Cys-19 carries the S-diacylglycerol cysteine lipid modification. The region spanning 69–296 (PLLLIHGFGG…MNDVGHVPMV (228 aa)) is the AB hydrolase-1 domain. Residue His-74 is part of the active site. Ser-142 functions as the Charge relay system in the catalytic mechanism.

The protein belongs to the lipase/esterase LIP3/BchO family.

The protein localises to the cell membrane. The catalysed reaction is a triacylglycerol + H2O = a diacylglycerol + a fatty acid + H(+). The polypeptide is Lipase 3 (lip3) (Moraxella sp. (strain TA144)).